A 51-amino-acid chain; its full sequence is Photosystem I reaction center subunit IX (51 aa).

The chain crosses the membrane as a helical span at residues phenylalanine 17 to valine 37.

This sequence belongs to the PsaJ family.

It is found in the cellular thylakoid membrane. May help in the organization of the PsaE and PsaF subunits. The polypeptide is Photosystem I reaction center subunit IX (Acaryochloris marina (strain MBIC 11017)).